Reading from the N-terminus, the 265-residue chain is HUWE1-associated protein modifying stress responses (265 aa).

Disordered stretches follow at residues 1–22 (MEDKKEEGESEIQEHGPEHWFS), 145–170 (RNSRAPPRLTVVSPNRATPTETGSSV), 195–218 (VRSSTPGSPTHVSGSSNTGRRRNG), and 240–265 (GTRKRSSAQCGDVITDSPTHKRNRMI). 2 stretches are compositionally biased toward polar residues: residues 156–170 (VSPNRATPTETGSSV) and 195–212 (VRSSTPGSPTHVSGSSNT).

Belongs to the TAPR1 family. Oligomer.

The protein resides in the nucleus. The protein localises to the cytoplasm. In terms of biological role, acts as a central player within a network of stress response pathways promoting cellular adaptability. Functions as a negative regulator of TP53/P53 in the cellular response to telomere erosion and probably also DNA damage. This chain is HUWE1-associated protein modifying stress responses, found in Xenopus laevis (African clawed frog).